We begin with the raw amino-acid sequence, 468 residues long: 3-isopropylmalate dehydratase large subunit (468 aa).

Residues Cys-347, Cys-408, and Cys-411 each coordinate [4Fe-4S] cluster.

The protein belongs to the aconitase/IPM isomerase family. LeuC type 1 subfamily. In terms of assembly, heterodimer of LeuC and LeuD. Requires [4Fe-4S] cluster as cofactor.

The enzyme catalyses (2R,3S)-3-isopropylmalate = (2S)-2-isopropylmalate. It functions in the pathway amino-acid biosynthesis; L-leucine biosynthesis; L-leucine from 3-methyl-2-oxobutanoate: step 2/4. Its function is as follows. Catalyzes the isomerization between 2-isopropylmalate and 3-isopropylmalate, via the formation of 2-isopropylmaleate. The protein is 3-isopropylmalate dehydratase large subunit of Methylobacillus flagellatus (strain ATCC 51484 / DSM 6875 / VKM B-1610 / KT).